Reading from the N-terminus, the 146-residue chain is Endoribonuclease YbeY (146 aa).

Zn(2+)-binding residues include His-108, His-112, and His-118.

The protein belongs to the endoribonuclease YbeY family. Zn(2+) serves as cofactor.

Its subcellular location is the cytoplasm. Its function is as follows. Single strand-specific metallo-endoribonuclease involved in late-stage 70S ribosome quality control and in maturation of the 3' terminus of the 16S rRNA. This Onion yellows phytoplasma (strain OY-M) protein is Endoribonuclease YbeY.